Reading from the N-terminus, the 563-residue chain is Arginine--tRNA ligase (563 aa).

A 'HIGH' region motif is present at residues 121–131; the sequence is PNIAKPFSIGH.

It belongs to the class-I aminoacyl-tRNA synthetase family. In terms of assembly, monomer.

The protein resides in the cytoplasm. The enzyme catalyses tRNA(Arg) + L-arginine + ATP = L-arginyl-tRNA(Arg) + AMP + diphosphate. The protein is Arginine--tRNA ligase of Streptococcus pyogenes serotype M18 (strain MGAS8232).